Consider the following 445-residue polypeptide: Phosphoglucosamine mutase (445 aa).

The active-site Phosphoserine intermediate is Ser102. Mg(2+) is bound by residues Ser102, Asp241, Asp243, and Asp245. Residue Ser102 is modified to Phosphoserine.

Belongs to the phosphohexose mutase family. Mg(2+) is required as a cofactor. In terms of processing, activated by phosphorylation.

It carries out the reaction alpha-D-glucosamine 1-phosphate = D-glucosamine 6-phosphate. Catalyzes the conversion of glucosamine-6-phosphate to glucosamine-1-phosphate. This is Phosphoglucosamine mutase from Shewanella sp. (strain ANA-3).